The sequence spans 786 residues: Pheromone-regulated membrane protein 10 (786 aa).

A compositionally biased stretch (basic and acidic residues) spans 1–28; it reads MADSGDKDVSKSVRFDKESIESKKRSSV. 2 disordered regions span residues 1-65 and 77-103; these read MADS…EDGN and NGGAGLAPGLSKANSNQEKTDLEDNDN. Residues 29-42 are compositionally biased toward low complexity; that stretch reads DDSASSYSSSSSGQ. The next 10 membrane-spanning stretches (helical) occupy residues 469-489, 491-511, 521-541, 545-565, 584-604, 620-640, 645-665, 675-695, 697-717, and 751-771; these read WVCVFLYGFCSAMVTPYAFGG, WINLAITFFMGSCVGMMQFIL, VFEITASIVVSFCGRAFGSIP, ICFGAITQGSLALILPGYIIL, FYAIIYSLFLGFGITLGAALF, PISPWFRFLFVPAFTIGISLI, WTQLPAMVFISCTGYVVTYWS, FTAALASFVIGILGNLYSRIW, GLAVSAMLPAIFVQVPSGIAS, and FGITMIEVSIGISVGLFASTL.

It belongs to the ThrE exporter (TC 2.A.79) family.

It is found in the membrane. The polypeptide is Pheromone-regulated membrane protein 10 (Candida glabrata (strain ATCC 2001 / BCRC 20586 / JCM 3761 / NBRC 0622 / NRRL Y-65 / CBS 138) (Yeast)).